The chain runs to 446 residues: Probable D-serine dehydratase (446 aa).

Residue K116 is modified to N6-(pyridoxal phosphate)lysine.

This sequence belongs to the serine/threonine dehydratase family. DsdA subfamily. Requires pyridoxal 5'-phosphate as cofactor.

It carries out the reaction D-serine = pyruvate + NH4(+). In Bacillus thuringiensis subsp. konkukian (strain 97-27), this protein is Probable D-serine dehydratase.